The primary structure comprises 467 residues: Nodulation protein T (467 aa).

The N-terminal stretch at 1 to 17 (MRFTRYTTPFFSLLLSG) is a signal peptide. Cysteine 18 carries the N-palmitoyl cysteine lipid modification. Cysteine 18 is lipidated: S-diacylglycerol cysteine.

This sequence belongs to the outer membrane factor (OMF) (TC 1.B.17) family.

It localises to the cell membrane. The chain is Nodulation protein T (nodT) from Rhizobium leguminosarum bv. trifolii.